The sequence spans 584 residues: A-type ATP synthase subunit A (584 aa).

234–241 (GPFGSGKT) is an ATP binding site.

It belongs to the ATPase alpha/beta chains family. In terms of assembly, has multiple subunits with at least A(3), B(3), C, D, E, F, H, I and proteolipid K(x).

Its subcellular location is the cell membrane. The catalysed reaction is ATP + H2O + 4 H(+)(in) = ADP + phosphate + 5 H(+)(out). Component of the A-type ATP synthase that produces ATP from ADP in the presence of a proton gradient across the membrane. The A chain is the catalytic subunit. The chain is A-type ATP synthase subunit A from Methanoculleus marisnigri (strain ATCC 35101 / DSM 1498 / JR1).